We begin with the raw amino-acid sequence, 198 residues long: MNNIFSKLRDFVGLNEQVEYEYYEEEADTDNYQNLYQQENPQPAPAEAAPNNRRWREPMTTMGDDVAAGTKSAMGNVIGMPGAINGISEVLVLEPRTFEEMPQAIQALRERKSVVLNLTIMDPDQAQRAVDFVAGGTYALDGHQERIGESIFLFTPSCVQVSTQGGVIHEVPQPPARPARPASTNPPAWGNETNRMAQ.

The tract at residues 170 to 198 (EVPQPPARPARPASTNPPAWGNETNRMAQ) is disordered. Low complexity predominate over residues 179–188 (ARPASTNPPA).

The protein belongs to the SepF family. In terms of assembly, homodimer. Interacts with FtsZ.

The protein resides in the cytoplasm. Functionally, cell division protein that is part of the divisome complex and is recruited early to the Z-ring. Probably stimulates Z-ring formation, perhaps through the cross-linking of FtsZ protofilaments. Its function overlaps with FtsA. This Nostoc sp. (strain PCC 7120 / SAG 25.82 / UTEX 2576) protein is Cell division protein SepF.